Consider the following 207-residue polypeptide: Thiamine-phosphate synthase (207 aa).

4-amino-2-methyl-5-(diphosphooxymethyl)pyrimidine contacts are provided by residues 37-41 and asparagine 69; that span reads QLREK. Mg(2+) contacts are provided by aspartate 70 and aspartate 89. Serine 108 provides a ligand contact to 4-amino-2-methyl-5-(diphosphooxymethyl)pyrimidine. 2-[(2R,5Z)-2-carboxy-4-methylthiazol-5(2H)-ylidene]ethyl phosphate is bound at residue 134–136; sequence TGS. Lysine 137 is a binding site for 4-amino-2-methyl-5-(diphosphooxymethyl)pyrimidine. 2-[(2R,5Z)-2-carboxy-4-methylthiazol-5(2H)-ylidene]ethyl phosphate-binding positions include glycine 165 and 185–186; that span reads IS.

It belongs to the thiamine-phosphate synthase family. Mg(2+) serves as cofactor.

It carries out the reaction 2-[(2R,5Z)-2-carboxy-4-methylthiazol-5(2H)-ylidene]ethyl phosphate + 4-amino-2-methyl-5-(diphosphooxymethyl)pyrimidine + 2 H(+) = thiamine phosphate + CO2 + diphosphate. It catalyses the reaction 2-(2-carboxy-4-methylthiazol-5-yl)ethyl phosphate + 4-amino-2-methyl-5-(diphosphooxymethyl)pyrimidine + 2 H(+) = thiamine phosphate + CO2 + diphosphate. The enzyme catalyses 4-methyl-5-(2-phosphooxyethyl)-thiazole + 4-amino-2-methyl-5-(diphosphooxymethyl)pyrimidine + H(+) = thiamine phosphate + diphosphate. The protein operates within cofactor biosynthesis; thiamine diphosphate biosynthesis; thiamine phosphate from 4-amino-2-methyl-5-diphosphomethylpyrimidine and 4-methyl-5-(2-phosphoethyl)-thiazole: step 1/1. Condenses 4-methyl-5-(beta-hydroxyethyl)thiazole monophosphate (THZ-P) and 2-methyl-4-amino-5-hydroxymethyl pyrimidine pyrophosphate (HMP-PP) to form thiamine monophosphate (TMP). The sequence is that of Thiamine-phosphate synthase from Desulfitobacterium hafniense (strain DSM 10664 / DCB-2).